The sequence spans 201 residues: Zinc finger protein 239 (201 aa).

7 consecutive C2H2-type zinc fingers follow at residues 6-28 (YKCDKCGKGFTRSSSLLVHHSVH), 34-56 (FKCDRCGKGFSQSSKLHIHKRVH), 62-84 (YACEECGMSFSQRSNLHIHQRVH), 90-112 (YKCGECGKGFSQSSNLHIHRCTH), 118-140 (YQCYECGKGFSQSSDLRIHLRVH), 146-168 (YHCGKCGQGFSQSSKLLIHQRVH), and 174-196 (YECSKCGKGFSQSSNLHIHQRVH).

This sequence belongs to the krueppel C2H2-type zinc-finger protein family. In terms of tissue distribution, preferentially expressed in transformed mouse cells.

It localises to the nucleus. Functionally, may be involved in transcriptional regulation. The polypeptide is Zinc finger protein 239 (Znf239) (Mus musculus (Mouse)).